A 144-amino-acid chain; its full sequence is DNA-directed RNA polymerases II and V subunit 6B (144 aa).

A compositionally biased stretch (acidic residues) spans 1 to 32; it reads MADDDYNEVDDLGYEDEPAEPEIEEGVEEDAD. Residues 1–62 form a disordered region; sequence MADDDYNEVD…EPVQRPRKTS (62 aa). A compositionally biased stretch (basic and acidic residues) spans 46–56; sequence TEDKVETEPVQ.

Belongs to the archaeal Rpo6/eukaryotic RPB6 RNA polymerase subunit family. In terms of assembly, component of the RNA polymerase II and V complexes.

The protein localises to the nucleus. In terms of biological role, DNA-dependent RNA polymerase catalyzes the transcription of DNA into RNA using the four ribonucleoside triphosphates as substrates. Component of RNA polymerase II which synthesizes mRNA precursors and many functional non-coding RNAs. Pol II is the central component of the basal RNA polymerase II transcription machinery. It is composed of mobile elements that move relative to each other. Component of RNA polymerase V which mediates RNA-directed DNA methylation-dependent (RdDM) transcriptional gene silencing (TGS) of endogenous repeated sequences, including transposable elements. The chain is DNA-directed RNA polymerases II and V subunit 6B (NRPB6B) from Arabidopsis thaliana (Mouse-ear cress).